Here is a 150-residue protein sequence, read N- to C-terminus: Large ribosomal subunit protein bL9 (150 aa).

This sequence belongs to the bacterial ribosomal protein bL9 family.

Functionally, binds to the 23S rRNA. The sequence is that of Large ribosomal subunit protein bL9 from Pediococcus pentosaceus (strain ATCC 25745 / CCUG 21536 / LMG 10740 / 183-1w).